A 220-amino-acid chain; its full sequence is Probable septum site-determining protein MinC (220 aa).

This sequence belongs to the MinC family. Interacts with MinD and FtsZ.

Functionally, cell division inhibitor that blocks the formation of polar Z ring septums. Rapidly oscillates between the poles of the cell to destabilize FtsZ filaments that have formed before they mature into polar Z rings. Prevents FtsZ polymerization. This chain is Probable septum site-determining protein MinC, found in Prochlorococcus marinus subsp. pastoris (strain CCMP1986 / NIES-2087 / MED4).